The chain runs to 221 residues: Glutathione peroxidase 6 (221 aa).

The signal sequence occupies residues 1–19; the sequence is MAQKLWGSCLFSLFMAALA. Residue Cys73 is part of the active site.

This sequence belongs to the glutathione peroxidase family.

It localises to the secreted. The enzyme catalyses 2 glutathione + H2O2 = glutathione disulfide + 2 H2O. This Mus musculus (Mouse) protein is Glutathione peroxidase 6 (Gpx6).